A 291-amino-acid polypeptide reads, in one-letter code: Maintenance of mitochondrial morphology protein 1 (291 aa).

Residues 1–16 (MPNNYVFSLQPTFTQG) lie on the Lumenal side of the membrane. The chain crosses the membrane as a helical span at residues 17–37 (LILGQLSILVLLGMILKFLFL). Residues 38 to 291 (DSTQHPFESS…KKEMSDADLS (254 aa)) lie on the Cytoplasmic side of the membrane. One can recognise an SMP-LTD domain in the interval 73 to 277 (NAESAEWFNV…LPGLASVVDV (205 aa)).

The protein belongs to the MMM1 family. Homodimer. Component of the ER-mitochondria encounter structure (ERMES) or MDM complex, composed of MMM1, MDM10, MDM12 and MDM34. An MMM1 homodimer associates with one molecule of MDM12 on each side in a pairwise head-to-tail manner, and the SMP-LTD domains of MMM1 and MDM12 generate a continuous hydrophobic tunnel for phospholipid trafficking.

Its subcellular location is the endoplasmic reticulum membrane. Functionally, component of the ERMES/MDM complex, which serves as a molecular tether to connect the endoplasmic reticulum (ER) and mitochondria. Components of this complex are involved in the control of mitochondrial shape and protein biogenesis, and function in nonvesicular lipid trafficking between the ER and mitochondria. The MDM12-MMM1 subcomplex functions in the major beta-barrel assembly pathway that is responsible for biogenesis of all outer membrane beta-barrel proteins, and acts in a late step after the SAM complex. The MDM10-MDM12-MMM1 subcomplex further acts in the TOM40-specific pathway after the action of the MDM12-MMM1 complex. Essential for establishing and maintaining the structure of mitochondria and maintenance of mtDNA nucleoids. The protein is Maintenance of mitochondrial morphology protein 1 of Laccaria bicolor (strain S238N-H82 / ATCC MYA-4686) (Bicoloured deceiver).